Consider the following 449-residue polypeptide: tRNA-2-methylthio-N(6)-dimethylallyladenosine synthase (449 aa).

Positions 4 to 119 constitute an MTTase N-terminal domain; it reads RTFHIETFGC…APQALDRLVE (116 aa). 6 residues coordinate [4Fe-4S] cluster: Cys13, Cys48, Cys82, Cys158, Cys162, and Cys165. Positions 144 to 375 constitute a Radical SAM core domain; that stretch reads GAVPASVFVN…QTLQNRLTER (232 aa). The TRAM domain maps to 378-446; that stretch reads QDMVGKKVEV…KHSLLAEQAG (69 aa).

This sequence belongs to the methylthiotransferase family. MiaB subfamily. Monomer. Requires [4Fe-4S] cluster as cofactor.

The protein localises to the cytoplasm. The enzyme catalyses N(6)-dimethylallyladenosine(37) in tRNA + (sulfur carrier)-SH + AH2 + 2 S-adenosyl-L-methionine = 2-methylsulfanyl-N(6)-dimethylallyladenosine(37) in tRNA + (sulfur carrier)-H + 5'-deoxyadenosine + L-methionine + A + S-adenosyl-L-homocysteine + 2 H(+). Catalyzes the methylthiolation of N6-(dimethylallyl)adenosine (i(6)A), leading to the formation of 2-methylthio-N6-(dimethylallyl)adenosine (ms(2)i(6)A) at position 37 in tRNAs that read codons beginning with uridine. This chain is tRNA-2-methylthio-N(6)-dimethylallyladenosine synthase, found in Nitratidesulfovibrio vulgaris (strain DP4) (Desulfovibrio vulgaris).